Here is a 188-residue protein sequence, read N- to C-terminus: dCTP deaminase (188 aa).

DCTP contacts are provided by residues 111–116 (KSTYAR), 135–137 (TLE), Q156, Y170, and Q180. E137 functions as the Proton donor/acceptor in the catalytic mechanism.

It belongs to the dCTP deaminase family. As to quaternary structure, homotrimer.

It carries out the reaction dCTP + H2O + H(+) = dUTP + NH4(+). It functions in the pathway pyrimidine metabolism; dUMP biosynthesis; dUMP from dCTP (dUTP route): step 1/2. In terms of biological role, catalyzes the deamination of dCTP to dUTP. This chain is dCTP deaminase, found in Neisseria meningitidis serogroup B (strain ATCC BAA-335 / MC58).